Reading from the N-terminus, the 370-residue chain is Quinolinate synthase (370 aa).

The iminosuccinate site is built by histidine 62 and serine 83. Cysteine 128 contacts [4Fe-4S] cluster. Iminosuccinate contacts are provided by residues 154-156 (YAN) and serine 171. Cysteine 215 contributes to the [4Fe-4S] cluster binding site. Iminosuccinate is bound by residues 241-243 (HPE) and threonine 258. Residue cysteine 312 coordinates [4Fe-4S] cluster.

The protein belongs to the quinolinate synthase family. Type 1 subfamily. The cofactor is [4Fe-4S] cluster.

It is found in the cytoplasm. The catalysed reaction is iminosuccinate + dihydroxyacetone phosphate = quinolinate + phosphate + 2 H2O + H(+). Its pathway is cofactor biosynthesis; NAD(+) biosynthesis; quinolinate from iminoaspartate: step 1/1. Catalyzes the condensation of iminoaspartate with dihydroxyacetone phosphate to form quinolinate. The chain is Quinolinate synthase from Neisseria meningitidis serogroup C / serotype 2a (strain ATCC 700532 / DSM 15464 / FAM18).